We begin with the raw amino-acid sequence, 1322 residues long: Chitin synthase chs-1 (1322 aa).

Residues 1–39 (MNDGENYWNAFRSHKRSATDGPTLSPWMVTVLQATKLLL) are Extracellular-facing. A helical membrane pass occupies residues 40-60 (FALCNIVLTLGSVFSKLIVLI). At 61–128 (MATNIVPRAH…KGQCGQLVKS (68 aa)) the chain is on the cytoplasmic side. The helical transmembrane segment at 129 to 149 (VVVLESLRAIGLAVLSFHVFP) threads the bilayer. The Extracellular portion of the chain corresponds to 150–156 (QLDLARC). A helical membrane pass occupies residues 157 to 177 (LVLSACFPLVAVLQRSLVAMV). Residues 178–193 (SAARTGRSFRNRLGRC) are Cytoplasmic-facing. The helical transmembrane segment at 194–214 (FVAIPHVIMFLVLMSSCYVWA) threads the bilayer. Over 215–221 (LFDNKFT) the chain is Extracellular. A helical membrane pass occupies residues 222 to 242 (AIIALPIGVICTSAGFWESWI). At 243-269 (DTTHSGTSFDELYRLKYAVRKMNTTTK) the chain is on the cytoplasmic side. The helical transmembrane segment at 270–290 (LIVSLMRIVCTVSVLVSAVYI) threads the bilayer. The Extracellular segment spans residues 291-316 (NDHKKLNSSHFVKAFFSFSTRQPHTR). Asn-297 is a glycosylation site (N-linked (GlcNAc...) asparagine). The helical transmembrane segment at 317 to 337 (LLLLATGIIVLHFVMRGISRF) threads the bilayer. At 338–342 (LAALD) the chain is on the cytoplasmic side. A helical transmembrane segment spans residues 343–363 (LHPFSFVHPLSIAPLIAYGYV). At 364-396 (RYACQSPTCSIARRLARFGLHWVCDQWFQSARG) the chain is on the extracellular side. Residues 397-417 (IASPDFYICLIWLLVGCYRGW) form a helical membrane-spanning segment. Topologically, residues 418 to 836 (RLVRQRYFDT…AISYAYIAYQ (419 aa)) are cytoplasmic. Residues 455-486 (LNRQEKTMLTEEEDISDENDELRIRNDEVDRV) are a coiled coil. A helical transmembrane segment spans residues 837–857 (FLVIFFSMLGPAIIFTMLVFA). Residues 858 to 865 (QVAAFELR) are Extracellular-facing. The chain crosses the membrane as a helical span at residues 866 to 886 (GSDVMLYNGIPIGFFIVLCFT). Topologically, residues 887-892 (TESNIQ) are cytoplasmic. The chain crosses the membrane as a helical span at residues 893–913 (LIYAKYMSIAYAFVMLAVLVA). Residues 914–922 (TSSQIVLET) are Extracellular-facing. The helical transmembrane segment at 923 to 943 (VLAPTSLFIVTMVGIFFFAAC) threads the bilayer. At 944-951 (LHPKEFTN) the chain is on the cytoplasmic side. Residues 952–972 (IIHGVVFFLMIPSTYVFLTLY) form a helical membrane-spanning segment. Residues 973-1148 (SLINLNVITW…AVAEGLASLR (176 aa)) lie on the Extracellular side of the membrane. Positions 1019–1053 (ISCREKKEHEERREKMEKKMQRMELALRSIESGAD) form a coiled coil. The chain crosses the membrane as a helical span at residues 1149–1169 (NQIAFTILLVNSLLALAIFLI). Residues 1170–1209 (QKHKNVLSIKFSPIKNFRWTKMNEMTGQYEETDEPLKIDP) are Cytoplasmic-facing. The chain crosses the membrane as a helical span at residues 1210 to 1230 (LGMGIVVFLLIILFVQTLGML). The Extracellular segment spans residues 1231–1322 (LHRLNTMIGA…MQRSALSTTE (92 aa)).

This sequence belongs to the chitin synthase family. Class IV subfamily.

Its subcellular location is the cell membrane. It catalyses the reaction [(1-&gt;4)-N-acetyl-beta-D-glucosaminyl](n) + UDP-N-acetyl-alpha-D-glucosamine = [(1-&gt;4)-N-acetyl-beta-D-glucosaminyl](n+1) + UDP + H(+). Its function is as follows. Essential for the embryonic synthesis of chitin, a component of the eggshell. The chain is Chitin synthase chs-1 from Caenorhabditis elegans.